The following is a 243-amino-acid chain: DNA repair protein RecO (243 aa).

The protein belongs to the RecO family.

Functionally, involved in DNA repair and RecF pathway recombination. The protein is DNA repair protein RecO of Frankia casuarinae (strain DSM 45818 / CECT 9043 / HFP020203 / CcI3).